The chain runs to 292 residues: 33 kDa chaperonin (292 aa).

Disulfide bonds link C230/C232 and C263/C266.

The protein belongs to the HSP33 family. Under oxidizing conditions two disulfide bonds are formed involving the reactive cysteines. Under reducing conditions zinc is bound to the reactive cysteines and the protein is inactive.

It localises to the cytoplasm. In terms of biological role, redox regulated molecular chaperone. Protects both thermally unfolding and oxidatively damaged proteins from irreversible aggregation. Plays an important role in the bacterial defense system toward oxidative stress. The sequence is that of 33 kDa chaperonin from Serratia proteamaculans (strain 568).